The sequence spans 524 residues: Acetyl-CoA hydrolase (524 aa).

275 to 279 (GIGNI) provides a ligand contact to CoA. Glu300 acts as the 5-glutamyl coenzyme A thioester intermediate in catalysis. The CoA site is built by Asn390 and Gly394.

The protein belongs to the acetyl-CoA hydrolase/transferase family.

The protein localises to the cytoplasm. The enzyme catalyses acetyl-CoA + H2O = acetate + CoA + H(+). Presumably involved in regulating the intracellular acetyl-CoA pool for fatty acid and cholesterol synthesis and fatty acid oxidation. In Candida albicans (strain SC5314 / ATCC MYA-2876) (Yeast), this protein is Acetyl-CoA hydrolase (ACH1).